Consider the following 507-residue polypeptide: F-box only protein 31 (507 aa).

Positions 19-42 (RQQRRGPAETAAADSEADTDPEEE) are disordered. The residue at position 33 (serine 33) is a Phosphoserine. The span at 33 to 42 (SEADTDPEEE) shows a compositional bias: acidic residues. Residue threonine 37 is modified to Phosphothreonine. Positions 50-55 (RCSLLE) match the D box motif. Residues 50-96 (RCSLLELPPELLVEIFASLPGTDLPSLAQVCSRFRRILHTDTIWRRR) enclose the F-box domain. 4 residues coordinate Zn(2+): cysteine 192, histidine 200, cysteine 216, and histidine 222. A Phosphoserine; by ATM modification is found at serine 264. Residues 283 to 285 (DDL) carry the DDL motif motif. A disordered region spans residues 366–417 (EQEAGEGAAPPREPSAKAADGPPAKDGKEPGGGAEAAEQSASSGQGQPFVLP). The segment covering 400–412 (EAAEQSASSGQGQ) has biased composition (low complexity). A Phosphoserine modification is found at serine 448.

The protein belongs to the FBXO31 family. As to quaternary structure, part of a SCF (SKP1-cullin-F-box) protein ligase complex SCF(FBXO31) composed of CUL1, SKP1, RBX1 and FBXO31. Interacts (when phosphorylated at Ser-33) with CDC20, promoting ubiquitination by the APC/C complex. In terms of processing, phosphorylation at Ser-264 by ATM following gamma-irradiation results in its stabilization. Phosphorylation at Ser-448 in absence of stress promotes its ubiquitination and degradation by the SCF(FBXO46) complex. Phosphorylation at Ser-33 by AKT1 promotes association with CDC20 and ubiquitination by the APC/C complex. Ubiquitinated by the SCF(FBXO46) complex in absence of stress, promoting its degradation. Ubiquitinated by the APC/C complex following phosphorylation at Ser-33, leading to its degradation by the proteasome.

The protein localises to the cytoplasm. Its subcellular location is the cytoskeleton. It is found in the microtubule organizing center. It localises to the centrosome. It participates in protein modification; protein ubiquitination. Functionally, substrate-recognition component of the SCF(FBXO31) protein ligase complex, which specifically mediates the ubiquitination of proteins amidated at their C-terminus in response to oxidative stress, leading to their degradation by the proteasome. FBXO31 specifically recognizes and binds C-terminal peptides bearing an amide: C-terminal amidation in response to oxidative stress takes place following protein fragmentation. The SCF(FBXO31) also plays a role in G1 arrest following DNA damage by mediating ubiquitination of phosphorylated cyclin-D1 (CCND1), promoting its degradation by the proteasome, resulting in G1 arrest. The SCF(FBXO31) complex is however not a major regulator of CCND1 stability during the G1/S transition. In response to genotoxic stress, the SCF(FBXO31) complex directs ubiquitination and degradation of phosphorylated MDM2, thereby promoting p53/TP53-mediated DNA damage response. SCF(FBXO31) complex is required for genomic integrity by catalyzing ubiquitination and degradation of cyclin-A (CCNA1 and/or CCNA2) during the G1 phase. In response to genotoxic stress, the SCF(FBXO31) complex directs ubiquitination and degradation of phosphorylated FBXO46 and MAP2K6. SCF(FBXO31) complex promotes ubiquitination and degradation of CDT1 during the G2 phase to prevent re-replication. The SCF(FBXO31) complex also mediates ubiquitination and degradation of DUSP6, OGT and PARD6A. This Mus musculus (Mouse) protein is F-box only protein 31.